The sequence spans 107 residues: MLRRDKKRESRIARERVFYLIKRAEEWKNIDYELARRYVELARKIAMRYRVRIPRELKATYCKKCLYPYKAGKFRVRVRKSRVIITCLNCGFERRIPIRPKRVNRKV.

4 residues coordinate Zn(2+): Cys62, Cys65, Cys87, and Cys90.

This sequence belongs to the eukaryotic/archaeal RNase P protein component 4 family. Consists of a catalytic RNA component and at least 4-5 protein subunits. Zn(2+) serves as cofactor.

It localises to the cytoplasm. It carries out the reaction Endonucleolytic cleavage of RNA, removing 5'-extranucleotides from tRNA precursor.. Functionally, part of ribonuclease P, a protein complex that generates mature tRNA molecules by cleaving their 5'-ends. The polypeptide is Ribonuclease P protein component 4 (Archaeoglobus fulgidus (strain ATCC 49558 / DSM 4304 / JCM 9628 / NBRC 100126 / VC-16)).